The sequence spans 2332 residues: Phosphatidylinositol phosphatase PTPRQ (2332 aa).

Residues 1-35 (MKKVPIKPEQPEKLRAFNISTHSFSLHWSLPSGHV) form the signal peptide. 18 Fibronectin type-III domains span residues 36–99 (ERYQ…TKPG), 100–195 (PPVF…TAES), 199–294 (KVVN…SSST), 350–438 (PPQN…PPDV), 441–539 (AVFD…SHPD), 514–606 (GLYE…SVRT), 610–705 (VPSS…TSED), 710–799 (SPQD…TSET), 804–894 (APEN…TEED), 899–988 (PPQD…TPEG), 993–1093 (PPKD…TDQD), 1098–1190 (FVGN…TEED), 1192–1282 (PETS…TDES), 1287–1380 (PPQN…TQES), 1384–1470 (VVQN…LPET), 1474–1578 (VPTN…TLPG), 1583–1681 (PPEN…TLES), and 1686–1787 (PPNN…IKAP). Topologically, residues 36 to 1947 (ERYQVDLVPD…GEGLSERTVE (1912 aa)) are extracellular. Asn-94 is a glycosylation site (N-linked (GlcNAc...) asparagine). Residues Asn-202 and Asn-394 are each glycosylated (N-linked (GlcNAc...) asparagine). N-linked (GlcNAc...) asparagine glycosylation is found at Asn-944, Asn-1038, Asn-1080, and Asn-1101. Residues Asn-1290 and Asn-1295 are each glycosylated (N-linked (GlcNAc...) asparagine). N-linked (GlcNAc...) asparagine glycosylation is present at Asn-1844. Residues 1948–1968 (IILSVTLCILSIILLGTAIFA) traverse the membrane as a helical segment. The Cytoplasmic portion of the chain corresponds to 1969–2332 (FARIRQKQKE…VELEWEETTM (364 aa)). Residues 2036-2292 (FQEEFSELPK…IFLHQCILDL (257 aa)) form the Tyrosine-protein phosphatase domain. Cys-2233 acts as the Phosphocysteine intermediate in catalysis.

Belongs to the protein-tyrosine phosphatase family. Receptor class 2A subfamily. As to quaternary structure, interacts with TPRN. TPRN, CLIC5 and PTPQR form concentric rings at the base of stereocilia and may form a complex. In developing kidney, it localizes to the basal membrane of podocytes, beginning when podocyte progenitors can first be identified in the embryonic kidney (at protein level). Expressed in lung and kidney.

Its subcellular location is the cell projection. It localises to the stereocilium. It is found in the apical cell membrane. The protein resides in the basal cell membrane. It carries out the reaction a 1,2-diacyl-sn-glycero-3-phospho-(1D-myo-inositol-3,4,5-trisphosphate) + H2O = a 1,2-diacyl-sn-glycero-3-phospho-(1D-myo-inositol-4,5-bisphosphate) + phosphate. The catalysed reaction is a 1,2-diacyl-sn-glycero-3-phospho-(1D-myo-inositol-3,4,5-trisphosphate) + H2O = a 1,2-diacyl-sn-glycero-3-phospho-(1D-myo-inositol-3,4-bisphosphate) + phosphate. The enzyme catalyses a 1,2-diacyl-sn-glycero-3-phospho-(1D-myo-inositol-3,5-bisphosphate) + H2O = a 1,2-diacyl-sn-glycero-3-phospho-(1D-myo-inositol-5-phosphate) + phosphate. It catalyses the reaction a 1,2-diacyl-sn-glycero-3-phospho-(1D-myo-inositol-3,5-bisphosphate) + H2O = a 1,2-diacyl-sn-glycero-3-phospho-(1D-myo-inositol-3-phosphate) + phosphate. Dephosphorylates phosphatidylinositol phosphates, such as phosphatidylinositol 3,4,5-trisphosphate (PIP3) and phosphatidylinositol 3,5-diphosphates, with preference for PIP3. Phosphate can be hydrolyzed from the D3 and D5 positions in the inositol ring. Has low tyrosine-protein phosphatase activity in vitro; however, the relevance of such activity in vivo is unclear. Plays an important role in adipogenesis of mesenchymal stem cells (MSCs). Regulates the phosphorylation state of AKT1 by regulating the levels of PIP3 in MSCs and preadipocyte cells. Required for hair bundle maturation, a process that enables hair cells to detect and transmit sound and balance signals effectively, therefore affecting auditory function. May act by regulating the level of phosphatidylinositol 4,5-bisphosphate (PIP2) level in the basal region of hair bundles. This chain is Phosphatidylinositol phosphatase PTPRQ (PTPRQ), found in Homo sapiens (Human).